A 929-amino-acid polypeptide reads, in one-letter code: Patatin-like phospholipase domain-containing protein CNE02340 (929 aa).

Residues 37 to 85 form a disordered region; the sequence is QPLDGDSSPLSPRSFSLPPESPQLSTASVKAPPPTWKYGPDNGTLRSGR. Residues 43–54 are compositionally biased toward low complexity; that stretch reads SSPLSPRSFSLP. Residues 126–146 form a helical membrane-spanning segment; sequence WPLLFFIFFIIYLEFSAYVIT. Positions 301-493 constitute a PNPLA domain; that stretch reads LCLSGGASFG…REDIPLGSLH (193 aa). The GXSXG signature appears at 332-336; sequence GTSAG. Ser334 (nucleophile) is an active-site residue. Asp480 (proton acceptor) is an active-site residue. Disordered regions lie at residues 644 to 765, 778 to 806, and 818 to 929; these read ALSH…NFGD, LSSP…QRFR, and VSES…QDGA. Composition is skewed to polar residues over residues 652 to 664 and 745 to 764; these read NDPA…TNPE and PTHS…SNFG. The span at 779–806 shows a compositional bias: low complexity; sequence SSPFRSIRSNTSSSSNNVQSPSSSQRFR. Over residues 856-878 the composition is skewed to basic and acidic residues; that stretch reads VESHSDRSEDEMLHSGANVKEEY.

This sequence belongs to the PLPL family.

It is found in the membrane. Its function is as follows. Probable lipid hydrolase. This Cryptococcus neoformans var. neoformans serotype D (strain JEC21 / ATCC MYA-565) (Filobasidiella neoformans) protein is Patatin-like phospholipase domain-containing protein CNE02340.